The sequence spans 338 residues: Lipoate-protein ligase A (338 aa).

A BPL/LPL catalytic domain is found at 29–216 (PATQRVLFLW…AFFAHYGERV (188 aa)). ATP-binding positions include R71, 76–79 (GAVF), and K134. (R)-lipoate is bound at residue K134.

It belongs to the LplA family. As to quaternary structure, monomer.

The protein resides in the cytoplasm. The enzyme catalyses L-lysyl-[lipoyl-carrier protein] + (R)-lipoate + ATP = N(6)-[(R)-lipoyl]-L-lysyl-[lipoyl-carrier protein] + AMP + diphosphate + H(+). It participates in protein modification; protein lipoylation via exogenous pathway; protein N(6)-(lipoyl)lysine from lipoate: step 1/2. The protein operates within protein modification; protein lipoylation via exogenous pathway; protein N(6)-(lipoyl)lysine from lipoate: step 2/2. Functionally, catalyzes both the ATP-dependent activation of exogenously supplied lipoate to lipoyl-AMP and the transfer of the activated lipoyl onto the lipoyl domains of lipoate-dependent enzymes. The polypeptide is Lipoate-protein ligase A (Shigella dysenteriae serotype 1 (strain Sd197)).